A 142-amino-acid chain; its full sequence is Acidic phospholipase A2 PA4 (142 aa).

Residues Trp-10, Gly-12, and Gly-14 each coordinate Ca(2+). Cystine bridges form between Cys-11–Cys-33, Cys-32–Cys-72, and Cys-39–Cys-65. Residue His-36 is part of the active site. Asp-37 lines the Ca(2+) pocket.

It belongs to the phospholipase A2 family. Group III subfamily. It depends on Ca(2+) as a cofactor. In terms of tissue distribution, expressed by the venom gland.

Its subcellular location is the secreted. The catalysed reaction is a 1,2-diacyl-sn-glycero-3-phosphocholine + H2O = a 1-acyl-sn-glycero-3-phosphocholine + a fatty acid + H(+). Functionally, PLA2 catalyzes the calcium-dependent hydrolysis of the 2-acyl groups in 3-sn-phosphoglycerides. The protein is Acidic phospholipase A2 PA4 of Heloderma suspectum (Gila monster).